The following is a 1648-amino-acid chain: AT-rich interactive domain-containing protein arid-1 (1648 aa).

Disordered regions lie at residues 150 to 270 (ISEA…PVIN) and 284 to 307 (RKLE…EEKL). Acidic residues-rich tracts occupy residues 166 to 193 (DDDE…DTEE), 219 to 228 (TQSEESSADS), and 251 to 260 (SDEEDQEDLA). A compositionally biased stretch (polar residues) spans 261-270 (TTDSENPVIN). Positions 655 to 745 (AETKDLFVAM…FLESYLAINT (91 aa)) constitute an ARID domain. 3 disordered regions span residues 763 to 935 (VLPG…KEDT), 1095 to 1563 (SEKR…KPHD), and 1628 to 1648 (KTAS…TPRP). The segment covering 848–860 (SDDVTDVPDDMTD) has biased composition (acidic residues). 2 stretches are compositionally biased toward basic and acidic residues: residues 861 to 878 (HEDL…ERKS) and 925 to 935 (SEGRGPRKEDT). 2 stretches are compositionally biased toward acidic residues: residues 1102–1112 (DDDESSDSDTD) and 1145–1154 (GDEEAEEEVK). Residues 1165 to 1185 (QESPPTTSQGTTTPETAATGG) are compositionally biased toward low complexity. Positions 1195–1208 (YPPVPEELVPPPPV) are enriched in pro residues. Polar residues predominate over residues 1213–1251 (FPSTDRFSSGGSSNYPTLSRQGSINSMASPMFSPNSDLS). Over residues 1313–1326 (RASERSIDSASEHH) the composition is skewed to basic and acidic residues. Positions 1348–1357 (ISTTQPTDTS) are enriched in polar residues. The span at 1377 to 1392 (ASPTLLTSGPLTLSSS) shows a compositional bias: low complexity. The span at 1393–1404 (APPPPPASPAPP) shows a compositional bias: pro residues. Composition is skewed to low complexity over residues 1474-1486 (STTT…PKSI) and 1531-1541 (TPTTMTTSTPT). Over residues 1542–1551 (RADSFQTQKN) the composition is skewed to polar residues.

Its subcellular location is the nucleus. Functionally, DNA-binding protein which modulates activity of several transcription factors. Plays a role in the modulation of endoplasmic reticulum (ER) homeostasis during chemical and pathogen stress, including exposure to the Gram-negative bacterium P.aeruginosa. This is AT-rich interactive domain-containing protein arid-1 from Caenorhabditis elegans.